A 494-amino-acid chain; its full sequence is DDB1- and CUL4-associated factor 4 (494 aa).

A disordered region spans residues M1–P65. Over residues K7 to A20 the composition is skewed to basic residues. A compositionally biased stretch (low complexity) spans S51 to S60. WD repeat units lie at residues F367–Q406 and G409–T450.

In terms of assembly, interacts with DDB1 and CUL4A.

It functions in the pathway protein modification; protein ubiquitination. Its function is as follows. May function as a substrate receptor for CUL4-DDB1 E3 ubiquitin-protein ligase complex. This Bos taurus (Bovine) protein is DDB1- and CUL4-associated factor 4 (DCAF4).